A 305-amino-acid chain; its full sequence is MHKLFILTGPTASGKSEVSKIVAERLGCTIINCDSKQIYQHVPTITDQAEYLRTNPQFGLYGYVHPSNSYSVGLWLEDAKREILLAWEKKSPAIVVGGSGLYISSLIYGLSEIPPADAHIRQKARALLSEVGNDTFFELLLRRDANVCKIDRRNSNQLLRAFEVFESTGVSIFSWRERCPKKRPFENCEVCVLFPPKEELHPKINSRLVDMINSSAVAEVEYLMSLNLPADAPIMKAIGVREVIEYLRGNISLPEAVEAAQRNTRQYAKRQYTWLRRQLPQDAQFLPTREEMVQHLVSRLTETEK.

9–16 (GPTASGKS) contributes to the ATP binding site. 11–16 (TASGKS) provides a ligand contact to substrate. The segment at 34 to 37 (DSKQ) is interaction with substrate tRNA.

This sequence belongs to the IPP transferase family. In terms of assembly, monomer. The cofactor is Mg(2+).

It catalyses the reaction adenosine(37) in tRNA + dimethylallyl diphosphate = N(6)-dimethylallyladenosine(37) in tRNA + diphosphate. Functionally, catalyzes the transfer of a dimethylallyl group onto the adenine at position 37 in tRNAs that read codons beginning with uridine, leading to the formation of N6-(dimethylallyl)adenosine (i(6)A). The chain is tRNA dimethylallyltransferase from Anaplasma marginale (strain Florida).